Here is a 440-residue protein sequence, read N- to C-terminus: MEPSFIQSAMALGLPSKKASSRNIAVERKNLLTVCRFSVKTLLEKYTAEPIDDSSEEFVNFAAILEHILSHRFKGHVSWFSTDGQRGFWDYIRIACSKVTNNCISSIENMENISSARAKGRAWIRLALMEKRLSEYIVTALRDTRTTRRFYDDGAILLREESSVLTGMLIGLSAIDFSFCLKGEGIDGKTPAVIDYTPYLKFTQSYDYLSEEDDRESVGGSSSEDSSPEHPYLPLLTDEESWYSKWRKMEQKFRIVYAQKGYLEELVRLRETQLKNLEAENKRLTQRISEQAEQSLQEKHQLEGVILELQEQLTGLLPSETAPIKQFTPSLGAPLVNQWPSLSTLNDNEAPVNPSLYRRHSFLSTEHLSAELSLSSESQRLDGKQDGEPWGPIGKDPTPSMLGLCGSLASIPSCKSLPSLKSNECLVSNSSETSPTGSPS.

Residues 52–184 (DDSSEEFVNF…IDFSFCLKGE (133 aa)) form the RUN domain. Positions 213–233 (DDRESVGGSSSEDSSPEHPYL) are disordered. A coiled-coil region spans residues 262-317 (YLEELVRLRETQLKNLEAENKRLTQRISEQAEQSLQEKHQLEGVILELQEQLTGLL). Positions 374-402 (LSSESQRLDGKQDGEPWGPIGKDPTPSML) are disordered.

Belongs to the RUNDC3 family.

The protein is RUN domain-containing protein 3A (rundc3a) of Xenopus tropicalis (Western clawed frog).